A 58-amino-acid chain; its full sequence is ADVPGNYPLDKDGNTYKCFLLGGNEECLNVCKLHGVQYGYCYASKCWCEYLEDDKDSV.

The 56-residue stretch at 3–58 folds into the LCN-type CS-alpha/beta domain; sequence VPGNYPLDKDGNTYKCFLLGGNEECLNVCKLHGVQYGYCYASKCWCEYLEDDKDSV. Cystine bridges form between cysteine 18–cysteine 41, cysteine 27–cysteine 46, and cysteine 31–cysteine 48.

As to expression, expressed by the venom gland.

The protein localises to the secreted. Functionally, beta toxins bind voltage-independently at site-4 of sodium channels (Nav) and shift the voltage of activation toward more negative potentials thereby affecting sodium channel activation and promoting spontaneous and repetitive firing. Moderately toxic, but very high abundant. Does not target reptilian channels. Does not produce effect when administered to blowfly and cabbage looper larvae. In mice, produces convulsions, tremors, increased ventilation and, subsequently, death. This chain is Birtoxin, found in Parabuthus transvaalicus (Transvaal thick-tailed scorpion).